The chain runs to 112 residues: Secretoglobin family 2B member 24 (112 aa).

Residues 1 to 23 form the signal peptide; it reads MKGTLLLLALLMIGELGFHTTEA.

Belongs to the secretoglobin family. Expressed in lacrimal gland, at higher level in males than females.

The protein localises to the secreted. In Mus musculus (Mouse), this protein is Secretoglobin family 2B member 24 (Scgb2b24).